The chain runs to 818 residues: Piwi-like protein (818 aa).

In terms of domain architecture, PAZ spans 220 to 339; it reads RINRVLNDNS…ITGELCFLCG (120 aa). The 300-residue stretch at 501-800 folds into the Piwi domain; that stretch reads KIALVFVPDD…LAELIGKVHK (300 aa).

Belongs to the argonaute family. Piwi subfamily.

The protein is Piwi-like protein (iwi) of Dugesia japonica (Planarian).